The following is a 512-amino-acid chain: Maturase K (512 aa).

The protein belongs to the intron maturase 2 family. MatK subfamily.

It localises to the plastid. The protein localises to the chloroplast. Its function is as follows. Usually encoded in the trnK tRNA gene intron. Probably assists in splicing its own and other chloroplast group II introns. In Filarum manserichense, this protein is Maturase K.